We begin with the raw amino-acid sequence, 422 residues long: Enolase (422 aa).

Gln163 contributes to the (2R)-2-phosphoglycerate binding site. The active-site Proton donor is the Glu205. Mg(2+)-binding residues include Asp242, Glu283, and Asp310. (2R)-2-phosphoglycerate-binding residues include Lys335, Arg364, Ser365, and Lys386. Lys335 (proton acceptor) is an active-site residue.

The protein belongs to the enolase family. The cofactor is Mg(2+).

The protein resides in the cytoplasm. It localises to the secreted. It is found in the cell surface. The catalysed reaction is (2R)-2-phosphoglycerate = phosphoenolpyruvate + H2O. It participates in carbohydrate degradation; glycolysis; pyruvate from D-glyceraldehyde 3-phosphate: step 4/5. Functionally, catalyzes the reversible conversion of 2-phosphoglycerate (2-PG) into phosphoenolpyruvate (PEP). It is essential for the degradation of carbohydrates via glycolysis. The sequence is that of Enolase from Bdellovibrio bacteriovorus (strain ATCC 15356 / DSM 50701 / NCIMB 9529 / HD100).